The sequence spans 86 residues: Serine protease inhibitor Kazal-type 2 (86 aa).

The signal sequence occupies residues 1 to 16; that stretch reads MLRLVLLLLATDFAAS. The region spanning 32–86 is the Kazal-like domain; the sequence is QFRTPDCHRFDYPVCSKHLSPVCGTDMNTYGNECTLCMKIREDGSHINIIKDEPC. 3 disulfides stabilise this stretch: Cys38/Cys68, Cys46/Cys65, and Cys54/Cys86.

It localises to the secreted. The protein resides in the cytoplasmic vesicle. Its subcellular location is the secretory vesicle. The protein localises to the acrosome. Functionally, as a strong inhibitor of acrosin, it is required for normal spermiogenesis. It probably hinders premature activation of proacrosin and other proteases, thus preventing the cascade of events leading to spermiogenesis defects. May be involved in the regulation of serine protease-dependent germ cell apoptosis. It also inhibits trypsin. This Rattus norvegicus (Rat) protein is Serine protease inhibitor Kazal-type 2 (Spink2).